A 388-amino-acid polypeptide reads, in one-letter code: Mitochondrial distribution and morphology protein 12 (388 aa).

Residues 1–388 (MSLDINWSLL…VFPNFHTVAL (388 aa)) enclose the SMP-LTD domain. Disordered regions lie at residues 75–101 (DDEG…RNEA) and 209–249 (PMSI…KVSS). Residues 83-101 (EEKQREKEREERDKLRNEA) are compositionally biased toward basic and acidic residues. Positions 234 to 243 (PSPPAHPAGL) are enriched in pro residues.

Belongs to the MDM12 family. As to quaternary structure, component of the ER-mitochondria encounter structure (ERMES) or MDM complex, composed of MMM1, MDM10, MDM12 and MDM34. An MMM1 homodimer associates with one molecule of MDM12 on each side in a pairwise head-to-tail manner, and the SMP-LTD domains of MMM1 and MDM12 generate a continuous hydrophobic tunnel for phospholipid trafficking.

It localises to the mitochondrion outer membrane. Its subcellular location is the endoplasmic reticulum membrane. Component of the ERMES/MDM complex, which serves as a molecular tether to connect the endoplasmic reticulum (ER) and mitochondria. Components of this complex are involved in the control of mitochondrial shape and protein biogenesis, and function in nonvesicular lipid trafficking between the ER and mitochondria. MDM12 is required for the interaction of the ER-resident membrane protein MMM1 and the outer mitochondrial membrane-resident beta-barrel protein MDM10. The MDM12-MMM1 subcomplex functions in the major beta-barrel assembly pathway that is responsible for biogenesis of all mitochondrial outer membrane beta-barrel proteins, and acts in a late step after the SAM complex. The MDM10-MDM12-MMM1 subcomplex further acts in the TOM40-specific pathway after the action of the MDM12-MMM1 complex. Essential for establishing and maintaining the structure of mitochondria and maintenance of mtDNA nucleoids. The protein is Mitochondrial distribution and morphology protein 12 of Cryptococcus neoformans var. neoformans serotype D (strain JEC21 / ATCC MYA-565) (Filobasidiella neoformans).